The following is a 124-amino-acid chain: Small ribosomal subunit protein uS12 (124 aa).

The tract at residues 1-24 is disordered; the sequence is MPTISQLVRKGRAKITKKSKSAAL. The segment covering 9-20 has biased composition (basic residues); it reads RKGRAKITKKSK. Asp-89 carries the post-translational modification 3-methylthioaspartic acid. The tract at residues 105-124 is disordered; it reads AGVEGRTQRRSKYGAKRPKK. A compositionally biased stretch (basic residues) spans 112-124; it reads QRRSKYGAKRPKK.

The protein belongs to the universal ribosomal protein uS12 family. As to quaternary structure, part of the 30S ribosomal subunit. Contacts proteins S8 and S17. May interact with IF1 in the 30S initiation complex.

Functionally, with S4 and S5 plays an important role in translational accuracy. Interacts with and stabilizes bases of the 16S rRNA that are involved in tRNA selection in the A site and with the mRNA backbone. Located at the interface of the 30S and 50S subunits, it traverses the body of the 30S subunit contacting proteins on the other side and probably holding the rRNA structure together. The combined cluster of proteins S8, S12 and S17 appears to hold together the shoulder and platform of the 30S subunit. The sequence is that of Small ribosomal subunit protein uS12 from Christiangramia forsetii (strain DSM 17595 / CGMCC 1.15422 / KT0803) (Gramella forsetii).